The sequence spans 1195 residues: Error-prone DNA polymerase (1195 aa).

The tract at residues alanine 1163–histidine 1195 is disordered.

Belongs to the DNA polymerase type-C family. DnaE2 subfamily.

The protein resides in the cytoplasm. It carries out the reaction DNA(n) + a 2'-deoxyribonucleoside 5'-triphosphate = DNA(n+1) + diphosphate. DNA polymerase involved in damage-induced mutagenesis and translesion synthesis (TLS). It is not the major replicative DNA polymerase. The protein is Error-prone DNA polymerase of Rhodopseudomonas palustris (strain ATCC BAA-98 / CGA009).